Reading from the N-terminus, the 405-residue chain is MTVRTPIYLDYSATTPIDPRVAEKMIPYLTEHFGNPASRSHAFGWTAEKAVENAREEVARLVNADPREIVWTSGATESNNLAIKGAANFYSPSKGKHIVTVQTEHKAVIDTVRELERLGYEATYLIPEPNGLIDLDKFKAALRPDTVLASVMLVNNEIGVIQDIEAIGNICREQGVIFHVDAAQATGKVHIDLQKLPVDLMSFSAHKTYGPKGIGALYVRRKPRVRIEAQMHGGGHERGMRSGTLATHQIVGMGEAFRIAREEMDSENVRIRQLRDRLLKGLQEIEEVYVNGDLEHRVAHNLNISFNFVEGESLIMAVKDIAVSSGSACTSASLEPSYVLRALGRSDELAHSSIRFSIGRFTTEEEIDYTIQLMKSKIGKLRELSPLWEMHLEGVDLNAVAWATH.

Pyridoxal 5'-phosphate contacts are provided by residues 75 to 76 (AT), Asn156, Gln184, and 204 to 206 (SAH). N6-(pyridoxal phosphate)lysine is present on Lys207. Pyridoxal 5'-phosphate is bound at residue Thr244. Cys329 serves as the catalytic Cysteine persulfide intermediate. [2Fe-2S] cluster is bound at residue Cys329.

It belongs to the class-V pyridoxal-phosphate-dependent aminotransferase family. NifS/IscS subfamily. In terms of assembly, homodimer. Forms a heterotetramer with IscU, interacts with other sulfur acceptors. Requires pyridoxal 5'-phosphate as cofactor.

The protein resides in the cytoplasm. The catalysed reaction is (sulfur carrier)-H + L-cysteine = (sulfur carrier)-SH + L-alanine. Its pathway is cofactor biosynthesis; iron-sulfur cluster biosynthesis. Functionally, master enzyme that delivers sulfur to a number of partners involved in Fe-S cluster assembly, tRNA modification or cofactor biosynthesis. Catalyzes the removal of elemental sulfur atoms from cysteine to produce alanine. Functions as a sulfur delivery protein for Fe-S cluster synthesis onto IscU, an Fe-S scaffold assembly protein, as well as other S acceptor proteins. This is Cysteine desulfurase IscS from Methylobacillus flagellatus (strain ATCC 51484 / DSM 6875 / VKM B-1610 / KT).